The sequence spans 206 residues: Small ribosomal subunit protein uS4 (206 aa).

One can recognise an S4 RNA-binding domain in the interval 96–156 (CRLDNVVYRM…EKSLGQLRIV (61 aa)).

This sequence belongs to the universal ribosomal protein uS4 family. In terms of assembly, part of the 30S ribosomal subunit. Contacts protein S5. The interaction surface between S4 and S5 is involved in control of translational fidelity.

In terms of biological role, one of the primary rRNA binding proteins, it binds directly to 16S rRNA where it nucleates assembly of the body of the 30S subunit. With S5 and S12 plays an important role in translational accuracy. In Pseudomonas putida (strain ATCC 47054 / DSM 6125 / CFBP 8728 / NCIMB 11950 / KT2440), this protein is Small ribosomal subunit protein uS4.